A 23-amino-acid chain; its full sequence is Retinol-binding protein 3 (23 aa).

The protein localises to the secreted. It is found in the extracellular space. The protein resides in the extracellular matrix. Its subcellular location is the interphotoreceptor matrix. Functionally, IRBP shuttles 11-cis and all trans retinoids between the retinol isomerase in the pigment epithelium and the visual pigments in the photoreceptor cells of the retina. The sequence is that of Retinol-binding protein 3 (RBP3) from Oryctolagus cuniculus (Rabbit).